The chain runs to 277 residues: Phosphoenolpyruvate synthase regulatory protein (277 aa).

157-164 (GVSRCGKT) contacts ADP.

Belongs to the pyruvate, phosphate/water dikinase regulatory protein family. PSRP subfamily.

The catalysed reaction is [pyruvate, water dikinase] + ADP = [pyruvate, water dikinase]-phosphate + AMP + H(+). It carries out the reaction [pyruvate, water dikinase]-phosphate + phosphate + H(+) = [pyruvate, water dikinase] + diphosphate. Its function is as follows. Bifunctional serine/threonine kinase and phosphorylase involved in the regulation of the phosphoenolpyruvate synthase (PEPS) by catalyzing its phosphorylation/dephosphorylation. This chain is Phosphoenolpyruvate synthase regulatory protein, found in Escherichia coli O17:K52:H18 (strain UMN026 / ExPEC).